The following is a 469-amino-acid chain: UDP-N-acetylmuramate--L-alanine ligase (469 aa).

An ATP-binding site is contributed by 118-124 (GTHGKTT).

Belongs to the MurCDEF family.

It is found in the cytoplasm. The catalysed reaction is UDP-N-acetyl-alpha-D-muramate + L-alanine + ATP = UDP-N-acetyl-alpha-D-muramoyl-L-alanine + ADP + phosphate + H(+). It functions in the pathway cell wall biogenesis; peptidoglycan biosynthesis. Its function is as follows. Cell wall formation. The polypeptide is UDP-N-acetylmuramate--L-alanine ligase (Lachnoclostridium phytofermentans (strain ATCC 700394 / DSM 18823 / ISDg) (Clostridium phytofermentans)).